A 485-amino-acid polypeptide reads, in one-letter code: NADH-quinone oxidoreductase subunit N (485 aa).

The next 14 helical transmembrane spans lie at 3-23, 30-50, 67-87, 96-116, 120-140, 154-174, 202-222, 247-267, 271-291, 299-319, 332-352, 375-395, 411-431, and 453-473; these read LFMP…TDLF, HLAY…VLNW, YASF…MASV, FQGE…MMAS, LITM…LVGF, LLLG…IYGF, FILG…AVPF, AAGF…PLAL, WALI…VLAI, MLGY…AAVG, LFYL…IIAI, ASAL…AGFL, WLMI…FNVI, and LALG…ETLL.

The protein belongs to the complex I subunit 2 family. In terms of assembly, NDH-1 is composed of 14 different subunits. Subunits NuoA, H, J, K, L, M, N constitute the membrane sector of the complex.

The protein resides in the cell membrane. It catalyses the reaction a quinone + NADH + 5 H(+)(in) = a quinol + NAD(+) + 4 H(+)(out). In terms of biological role, NDH-1 shuttles electrons from NADH, via FMN and iron-sulfur (Fe-S) centers, to quinones in the respiratory chain. The immediate electron acceptor for the enzyme in this species is believed to be ubiquinone. Couples the redox reaction to proton translocation (for every two electrons transferred, four hydrogen ions are translocated across the cytoplasmic membrane), and thus conserves the redox energy in a proton gradient. This is NADH-quinone oxidoreductase subunit N from Dehalococcoides mccartyi (strain ATCC BAA-2100 / JCM 16839 / KCTC 5957 / BAV1).